The following is a 145-amino-acid chain: Maximins 5/H4 type 2 (145 aa).

The N-terminal stretch at Met1–Ala18 is a signal peptide. Propeptides lie at residues Arg19–Arg43 and Thr74–Arg124. The residue at position 144 (Leu144) is a Leucine amide.

Belongs to the bombinin family. Expressed by the skin glands.

The protein localises to the secreted. Its function is as follows. Maximin-5 shows antibacterial activity against both Gram-positive and Gram-negative bacteria. The only exception is the resistance of E.coli. Also shows antimicrobial activity against fungi C.albicans, A.flavus and P.uticale. It has little hemolytic activity. It does not possess a significant cytotoxicity against tumor cell lines. It does not possess a significant anti-HIV activity. In terms of biological role, maximin-H4 shows antibacterial activity against both Gram-positive and Gram-negative bacteria. It also shows antimicrobial activity against the fungus C.albicans. Shows strong hemolytic activity. In Bombina maxima (Giant fire-bellied toad), this protein is Maximins 5/H4 type 2.